The following is a 350-amino-acid chain: UDP-3-O-acylglucosamine N-acyltransferase (350 aa).

The Proton acceptor role is filled by His-240.

This sequence belongs to the transferase hexapeptide repeat family. LpxD subfamily. In terms of assembly, homotrimer.

It catalyses the reaction a UDP-3-O-[(3R)-3-hydroxyacyl]-alpha-D-glucosamine + a (3R)-hydroxyacyl-[ACP] = a UDP-2-N,3-O-bis[(3R)-3-hydroxyacyl]-alpha-D-glucosamine + holo-[ACP] + H(+). The protein operates within bacterial outer membrane biogenesis; LPS lipid A biosynthesis. Functionally, catalyzes the N-acylation of UDP-3-O-acylglucosamine using 3-hydroxyacyl-ACP as the acyl donor. Is involved in the biosynthesis of lipid A, a phosphorylated glycolipid that anchors the lipopolysaccharide to the outer membrane of the cell. This is UDP-3-O-acylglucosamine N-acyltransferase from Methylobacillus flagellatus (strain ATCC 51484 / DSM 6875 / VKM B-1610 / KT).